The primary structure comprises 184 residues: dCTP deaminase (184 aa).

107-112 contributes to the dCTP binding site; the sequence is KSTYAR. Glu-133 acts as the Proton donor/acceptor in catalysis. 3 residues coordinate dCTP: Gln-152, Tyr-166, and Gln-176.

The protein belongs to the dCTP deaminase family. In terms of assembly, homotrimer.

The catalysed reaction is dCTP + H2O + H(+) = dUTP + NH4(+). It participates in pyrimidine metabolism; dUMP biosynthesis; dUMP from dCTP (dUTP route): step 1/2. Catalyzes the deamination of dCTP to dUTP. The polypeptide is dCTP deaminase (Granulibacter bethesdensis (strain ATCC BAA-1260 / CGDNIH1)).